Reading from the N-terminus, the 63-residue chain is GDDVKSACCDTCLCTKSEPPTCRCVDVGERCHSACNSCVCRYSNPPKCQCFDTHKFCYKSCHN.

7 cysteine pairs are disulfide-bonded: C8/C61, C9/C24, C12/C57, C14/C22, C31/C38, C35/C50, and C40/C48.

The protein belongs to the Bowman-Birk serine protease inhibitor family.

This inhibitor has two domains, each with separate antiprotease activity. Inhibits bovine trypsin and chymotrypsin, in a molar ratio of 1:1. The trypsin inhibition of FBI is independent of chymotrypsin inhibition, but the chymotrypsin inhibition is not completely independent of trypsin inhibition. The sequence is that of Bowman-Birk type proteinase inhibitor from Vicia faba (Broad bean).